The sequence spans 215 residues: Glycerol-3-phosphate acyltransferase (215 aa).

Transmembrane regions (helical) follow at residues 3 to 23 (LILL…LWIG), 42 to 61 (TNTF…LIDI), 68 to 90 (TLLP…FAVL), 110 to 130 (AGVL…VFVL), 134 to 154 (LFSM…ISVL), and 162 to 182 (LLPG…AIII).

Belongs to the PlsY family. In terms of assembly, probably interacts with PlsX.

The protein resides in the cell membrane. It catalyses the reaction an acyl phosphate + sn-glycerol 3-phosphate = a 1-acyl-sn-glycero-3-phosphate + phosphate. Its pathway is lipid metabolism; phospholipid metabolism. Catalyzes the transfer of an acyl group from acyl-phosphate (acyl-PO(4)) to glycerol-3-phosphate (G3P) to form lysophosphatidic acid (LPA). This enzyme utilizes acyl-phosphate as fatty acyl donor, but not acyl-CoA or acyl-ACP. In Streptococcus equi subsp. zooepidemicus (strain H70), this protein is Glycerol-3-phosphate acyltransferase.